Consider the following 80-residue polypeptide: Putative defensin-like protein 28 (80 aa).

The first 22 residues, M1–G22, serve as a signal peptide directing secretion.

Belongs to the DEFL family.

It is found in the secreted. The chain is Putative defensin-like protein 28 from Arabidopsis thaliana (Mouse-ear cress).